The following is a 792-amino-acid chain: Phenylalanine--tRNA ligase beta subunit (792 aa).

The 109-residue stretch at 39 to 147 (GESLGQVVVA…DDAPVGQALA (109 aa)) folds into the tRNA-binding domain. The 76-residue stretch at 400 to 475 (PQPARILLRR…RIHGYDRVPT (76 aa)) folds into the B5 domain. Residues aspartate 453, aspartate 459, glutamate 462, and aspartate 463 each coordinate Mg(2+). In terms of domain architecture, FDX-ACB spans 698-791 (SRFPSVRRDL…IEREHRARIR (94 aa)).

It belongs to the phenylalanyl-tRNA synthetase beta subunit family. Type 1 subfamily. In terms of assembly, tetramer of two alpha and two beta subunits. Requires Mg(2+) as cofactor.

It is found in the cytoplasm. It catalyses the reaction tRNA(Phe) + L-phenylalanine + ATP = L-phenylalanyl-tRNA(Phe) + AMP + diphosphate + H(+). In Xanthomonas oryzae pv. oryzae (strain MAFF 311018), this protein is Phenylalanine--tRNA ligase beta subunit.